A 230-amino-acid chain; its full sequence is UPF0500 protein C1orf216 homolog (230 aa).

Residues 1–103 are disordered; the sequence is MFAAIQPGLA…AEPEKLSGAS (103 aa). Over residues 60–73 the composition is skewed to polar residues; the sequence is RSSSESPSDNQVFQ. The segment covering 85 to 94 has biased composition (low complexity); sequence PPEGAEIPGA.

The protein belongs to the UPF0500 family.

In Mus musculus (Mouse), this protein is UPF0500 protein C1orf216 homolog.